Reading from the N-terminus, the 889-residue chain is Low-affinity potassium transport protein (889 aa).

The Cytoplasmic segment spans residues 1 to 51 (MPTAKRTSSRASLALPFQLRLVHKKSWGHRLRDFISGFLKSCRPIAKYVFP). Residues 52-73 (NFIVVHYIYLITLSIIGSILLY) traverse the membrane as a helical segment. The Extracellular portion of the chain corresponds to 74 to 80 (PCKNTAF). A helical transmembrane segment spans residues 81 to 101 (IDVLFLAAGASTQGGLATKST). At 102–109 (NDFNLYQQ) the chain is on the cytoplasmic side. The helical transmembrane segment at 110 to 130 (IVVYVITLLSTPILIHGFLAF) threads the bilayer. At 131 to 464 (VRLYWFERYF…EYRALRLLCC (334 aa)) the chain is on the extracellular side. The interval 189–244 (REDPRQSASDVPMDSPDTSALSSISPLNVSSSKEESSDTQSSPPNFSSKRQPSDVD) is disordered. The segment covering 207-219 (SALSSISPLNVSS) has biased composition (low complexity). N-linked (GlcNAc...) asparagine glycans are attached at residues Asn216, Asn233, and Asn265. Residues 465-487 (ILMVYYIGFNILAFVTIVPWACT) form a helical membrane-spanning segment. Topologically, residues 488–499 (RHHYSEIIRRNG) are cytoplasmic. The chain crosses the membrane as a helical span at residues 500–521 (VSPTWWGFFTAMSAFSNLGLSL). At 522 to 524 (TAD) the chain is on the extracellular side. Residues 525–545 (SMVSFDTAPYPLIFMMFFIII) form a helical membrane-spanning segment. Topologically, residues 546 to 548 (GNT) are cytoplasmic. Residues 549–569 (GFPIMLRFIIWIMFKTSRDLS) form a helical membrane-spanning segment. The Extracellular segment spans residues 570 to 584 (QFKESLGFLLDHPRR). Residues 585-605 (CFTLLFPSGPTWWLFTTLVVL) traverse the membrane as a helical segment. Over 606-609 (NATD) the chain is Cytoplasmic. The chain crosses the membrane as a helical span at residues 610–630 (WILFIILDFNSAVVRQVAKGY). The Extracellular portion of the chain corresponds to 631–657 (RALMGLFQSVCTRTAGFNVVDLSKLHP). A helical membrane pass occupies residues 658 to 678 (SIQVSYMLMMYVSVLPLAISI). The Cytoplasmic segment spans residues 679–743 (RRTNVYEEQS…KSFVGAHLRR (65 aa)). Residues 705-733 (DDIKETDHDGESEERDTVSTKSKPKKQSP) form a disordered region. The chain crosses the membrane as a helical span at residues 744-764 (QLSFDLWYLFLGLFIICICEG). The Extracellular segment spans residues 765–776 (RKIEDVNKPDFN). The helical transmembrane segment at 777–797 (VFAILFEVVSAYGTVGLSLGY) threads the bilayer. The Cytoplasmic segment spans residues 798–889 (PNTNTSLSAQ…KIATKFWGKH (92 aa)).

Belongs to the TrkH potassium transport family.

It localises to the membrane. Functionally, this protein is required for low-affinity potassium transport. The protein is Low-affinity potassium transport protein (TRK2) of Saccharomyces cerevisiae (strain ATCC 204508 / S288c) (Baker's yeast).